The sequence spans 1323 residues: Nck-associated protein 5-like (1323 aa).

6 disordered regions span residues 1-22 (MDQPAGGTGKLRASAGEDDSME), 113-142 (QIPLTPLQPPSERPTSPAPNVSEGPATSLP), 156-175 (QQLRPGGPGPPATPPPALDA), 204-238 (PATPWRPTGQGPGSPEPINGEPCGPPQPEPSPWAP), 260-314 (PGEE…DTLL), and 341-714 (GATG…EQPE). A mediates interaction with CDK5RAP2 and is required for homodimerization and microtubule bundle formation region spans residues 1-135 (MDQPAGGTGK…PTSPAPNVSE (135 aa)). Residues 22-109 (ELSTCQELLH…LQQKLQLTAN (88 aa)) adopt a coiled-coil conformation. 2 stretches are compositionally biased toward pro residues: residues 162-172 (GPGPPATPPPA) and 226-236 (CGPPQPEPSPW). Positions 271–298 (ASSRAPPSAQGPSSGPHCAPGSSSSSSS) are enriched in low complexity. Residues 353–364 (PGKPNSPDPGPP) show a composition bias toward pro residues. A phosphoserine; by CDK1 mark is found at Ser-436, Ser-447, Ser-466, and Ser-473. Residues 480-483 (SRIP) carry the (S/T)X(I/L)P motif 1 motif. 3 positions are modified to phosphoserine: Ser-489, Ser-492, and Ser-494. Positions 531–542 (LRPSQSTVSTAL) are enriched in polar residues. Ser-573 is modified (phosphoserine; by CDK1). The segment covering 647-660 (RPGDPSHTPLRDRL) has biased composition (basic and acidic residues). A Phosphothreonine modification is found at Thr-654. Residues 743 to 1136 (RVYSSHSMGA…SGTPSKNLPK (394 aa)) form a mediates interaction with beta-tubulin and is required for microtubule bundle formation region. Position 760 is a phosphoserine; by CDK1 (Ser-760). 4 disordered regions span residues 778–875 (ALCP…HSAI), 892–948 (GQER…EVKT), 979–1003 (AYLSRARPRPGGPATVPSPGLGQAQ), and 1027–1323 (KELP…GSQG). Positions 799-817 (KPKSPHSSPTKLPSKSPTK) are enriched in low complexity. The (S/T)X(I/L)P motif 2 signature appears at 808–811 (TKLP). The (S/T)X(I/L)P motif 3; required for interaction with MAPRE1 motif lies at 918-921 (SKLP). Over residues 925–934 (RRTEATKNKD) the composition is skewed to basic and acidic residues. A coiled-coil region spans residues 942–985 (LRKEVKTEARKLEAESLNISKLMAKAEDLRRALEEEKAYLSRAR). The span at 1027 to 1041 (KELPPKSWREPKPEY) shows a compositional bias: basic and acidic residues. Composition is skewed to polar residues over residues 1097–1112 (VSTTHFTACGSLTRTL) and 1124–1136 (HSSSGTPSKNLPK). Residues 1143 to 1153 (DPPPGAPPARP) are compositionally biased toward pro residues. Position 1184 is a phosphoserine (Ser-1184). Composition is skewed to polar residues over residues 1225-1237 (TFPNTRTAGSSSD) and 1264-1273 (VDPSRTSTPQ). Positions 1302 to 1323 (LETSESLSDSLYDSLSSCGSQG) are enriched in low complexity.

As to quaternary structure, homodimer. Interacts with CDK5RAP2. Interacts with MAPRE1. Interacts with beta-tubulin. CDK1/Cyclin B-dependent phosphorylation mediates its dissociation from centrosomes during mitosis.

It is found in the cytoplasm. The protein resides in the cytoskeleton. It localises to the microtubule organizing center. Its subcellular location is the centrosome. In terms of biological role, regulates microtubule organization and stabilization. Promotes microtubule growth and bundling formation and stabilizes microtubules by increasing intense acetylation of microtubules. Both tubulin-binding and homodimer formation are required for NCKAP5L-mediated microtubule bundle formation. The polypeptide is Nck-associated protein 5-like (Nckap5l) (Mus musculus (Mouse)).